A 231-amino-acid chain; its full sequence is Tegument protein UL51 homolog (231 aa).

A lipid anchor (S-palmitoyl cysteine; by host) is attached at C12.

It belongs to the herpesviridae UL51 family. Oligomerizes. Interacts with U75; this interaction mediates U75 incorporation to virions. Phosphorylated. In terms of processing, palmitoylation is necessary for Golgi localization.

It localises to the virion tegument. The protein resides in the host cytoplasm. Its subcellular location is the host Golgi apparatus. Plays several roles during the time course of infection, including egress of virus particles from the perinuclear space and secondary envelopment of cytoplasmic capsids that bud into specific trans-Golgi network (TGN)-derived membranes. This Human herpesvirus 6B (strain Z29) (HHV-6 variant B) protein is Tegument protein UL51 homolog (U44).